A 220-amino-acid polypeptide reads, in one-letter code: Probable N-acetyl-alpha-D-glucosaminyl L-malate deacetylase 2 (220 aa).

Zn(2+)-binding residues include H11, D14, and H125.

This sequence belongs to the PIGL family. Zn(2+) is required as a cofactor.

The catalysed reaction is (S)-malyl N-acetyl-alpha-D-glucosaminide + H2O = (S)-malyl alpha-D-glucosaminide + acetate. In terms of biological role, involved in bacillithiol (BSH) biosynthesis. Catalyzes the second step of the pathway, the deacetylation of N-acetylglucosaminylmalate (GlcNAc-Mal) to glucosamine malate (GlcN-Mal). Has weak activity compared with bshB1. In Bacillus cereus (strain ATCC 14579 / DSM 31 / CCUG 7414 / JCM 2152 / NBRC 15305 / NCIMB 9373 / NCTC 2599 / NRRL B-3711), this protein is Probable N-acetyl-alpha-D-glucosaminyl L-malate deacetylase 2.